The sequence spans 263 residues: Tryptophan 2,3-dioxygenase (263 aa).

Substrate is bound by residues 32 to 36 (FIVIH), Tyr94, and Arg98. His221 provides a ligand contact to heme. Thr235 provides a ligand contact to substrate.

The protein belongs to the tryptophan 2,3-dioxygenase family. As to quaternary structure, homotetramer. Requires heme as cofactor.

It carries out the reaction L-tryptophan + O2 = N-formyl-L-kynurenine. Its pathway is amino-acid degradation; L-tryptophan degradation via kynurenine pathway; L-kynurenine from L-tryptophan: step 1/2. Functionally, heme-dependent dioxygenase that catalyzes the oxidative cleavage of the L-tryptophan (L-Trp) pyrrole ring and converts L-tryptophan to N-formyl-L-kynurenine. Catalyzes the oxidative cleavage of the indole moiety. The sequence is that of Tryptophan 2,3-dioxygenase from Caulobacter vibrioides (strain ATCC 19089 / CIP 103742 / CB 15) (Caulobacter crescentus).